Reading from the N-terminus, the 104-residue chain is Protein SMALL AUXIN UP-REGULATED RNA 9 (104 aa).

It belongs to the ARG7 family. Interacts with and inhibits PP2C-D subfamily of type 2C phosphatases such as PP2C67/PP2C-D1. As to expression, expressed in etiolated hypocotyls, petioles, leaves and flowers.

The protein resides in the cell membrane. Functionally, provide a mechanistic link between auxin and plasma membrane H(+)-ATPases (PM H(+)-ATPases, e.g. AHA1 and AHA2), and triggers PM H(+)-ATPases activity by promoting phosphorylation of their C-terminal autoinhibitory domain as a result of PP2C-D subfamily of type 2C phosphatases inhibition, thus leading to the acidification of the apoplast and the facilitation of solutes and water uptake to drive cell expansion. Triggers plant growth probably by promoting cell elongation. Regulates branch angles and bending. Probably involved in light intensity mediated root development. This is Protein SMALL AUXIN UP-REGULATED RNA 9 from Arabidopsis thaliana (Mouse-ear cress).